We begin with the raw amino-acid sequence, 338 residues long: Putative transport protein TM_1349 (338 aa).

The next 7 membrane-spanning stretches (helical) occupy residues 20 to 40 (ILIS…IVLM), 68 to 88 (ALLL…PPVF), 147 to 167 (VSVT…VFYI), 203 to 223 (VIFI…EAFN), 239 to 259 (FIPI…SLTL), 263 to 283 (GVLL…VVFI), and 297 to 317 (IILS…FVGV).

The protein belongs to the autoinducer-2 exporter (AI-2E) (TC 2.A.86) family.

It is found in the cell membrane. The chain is Putative transport protein TM_1349 from Thermotoga maritima (strain ATCC 43589 / DSM 3109 / JCM 10099 / NBRC 100826 / MSB8).